The chain runs to 142 residues: MATYMANAKTVSPRWLLVNAEGKTLGRLASRIAAILRGKHKAEFTPHVDAGDFVVVINVDKLKVTGNKTQDKQYHHHSGYPGGLKTINFADLQAKKPQRILELAIKGMLPKGPLGRQLYRKLKIYAGDQHPHQAQQPELIDL.

It belongs to the universal ribosomal protein uL13 family. As to quaternary structure, part of the 50S ribosomal subunit.

Its function is as follows. This protein is one of the early assembly proteins of the 50S ribosomal subunit, although it is not seen to bind rRNA by itself. It is important during the early stages of 50S assembly. The protein is Large ribosomal subunit protein uL13 of Coxiella burnetii (strain CbuK_Q154) (Coxiella burnetii (strain Q154)).